Reading from the N-terminus, the 150-residue chain is D-aminoacyl-tRNA deacylase (150 aa).

The Gly-cisPro motif, important for rejection of L-amino acids signature appears at 138-139 (GP).

It belongs to the DTD family. In terms of assembly, homodimer.

The protein localises to the cytoplasm. The catalysed reaction is glycyl-tRNA(Ala) + H2O = tRNA(Ala) + glycine + H(+). It catalyses the reaction a D-aminoacyl-tRNA + H2O = a tRNA + a D-alpha-amino acid + H(+). Its function is as follows. An aminoacyl-tRNA editing enzyme that deacylates mischarged D-aminoacyl-tRNAs. Also deacylates mischarged glycyl-tRNA(Ala), protecting cells against glycine mischarging by AlaRS. Acts via tRNA-based rather than protein-based catalysis; rejects L-amino acids rather than detecting D-amino acids in the active site. By recycling D-aminoacyl-tRNA to D-amino acids and free tRNA molecules, this enzyme counteracts the toxicity associated with the formation of D-aminoacyl-tRNA entities in vivo and helps enforce protein L-homochirality. In Flavobacterium psychrophilum (strain ATCC 49511 / DSM 21280 / CIP 103535 / JIP02/86), this protein is D-aminoacyl-tRNA deacylase.